The chain runs to 1982 residues: Ras guanine nucleotide exchange factor V (1982 aa).

15 LRR repeats span residues 1–26 (MGNI…SLEG), 47–68 (LTQL…ITNL), 69–94 (SNLS…PFKP), 105–128 (NENL…VFVL), 130–151 (NLKQ…LCGG), 164–187 (ACQL…IGDQ), 188–210 (LTTL…SFSN), 212–234 (VSLT…LCTL), 236–257 (KLVH…HTLG), 261–284 (LPSL…ILEI), 286–307 (SLRV…IGNL), 308–330 (LNLN…IGEL), 331–352 (INLR…EFSK), 354–376 (SKLN…LHSL), and 378–399 (QLLR…LIKS). Residues 1 to 1831 (MGNINSICLN…IANAFYELRN (1831 aa)) are Extracellular-facing. 3 disordered regions span residues 414 to 436 (YGST…STHG), 457 to 532 (NQIN…NKKQ), and 615 to 654 (NNSG…RRGS). Composition is skewed to low complexity over residues 415-436 (GSTM…STHG) and 457-495 (NQIN…TPNG). The stretch at 443–466 (DILLSSVTLNNSILNQINNNNNNN) is one LRR 16 repeat. Polar residues predominate over residues 506-520 (LTISRSLFRGNSSNL). A coiled-coil region spans residues 515–567 (GNSSNLESEKEDFINKKQQQQQQQQQQQQQQQQQQQQQQQQQQQQQQQQQQLG). An LRR 17 repeat occupies 592–615 (EDDIQKMQLGLEALSNLETSIGSN). Over residues 616 to 642 (NSGGGDSMNGSGGNINNSGGSGSGCGT) the composition is skewed to gly residues. LRR repeat units lie at residues 657 to 684 (LPPT…VMSG) and 773 to 796 (HSNL…LSSS). 2 disordered regions span residues 756-778 (QSST…NLSQ) and 807-829 (LQFQ…SNQP). The 405-residue stretch at 832–1236 (TIVPSFSKFK…QIKYSIDRYG (405 aa)) folds into the GBD/FH3 domain. LRR repeat units lie at residues 979–1003 (LLGI…GYCL), 1075–1100 (SPYV…VFKI), 1239–1263 (VPAI…RWVD), and 1689–1712 (VQNM…FVDL). Residues 1595-1717 (KDRRVSSVTL…LFVDLSTKSY (123 aa)) enclose the N-terminal Ras-GEF domain. The Ras-GEF domain occupies 1747-1974 (DEIEIARQLS…YEMSLSAEPR (228 aa)). The helical transmembrane segment at 1832 to 1848 (YHLLMAIISGLNASPVL) threads the bilayer. Topologically, residues 1849–1982 (RLKYTKGKLS…PRNAERYDIQ (134 aa)) are cytoplasmic. LRR repeat units lie at residues 1865 to 1888 (LDTL…LAAA) and 1917 to 1941 (RINF…LFPY).

Its subcellular location is the membrane. Promotes the exchange of Ras-bound GDP by GTP. The protein is Ras guanine nucleotide exchange factor V (gefV) of Dictyostelium discoideum (Social amoeba).